Here is a 338-residue protein sequence, read N- to C-terminus: MSGMRTLGEFIVEKQADFPHASGDLSSLLASIRLAAKIVNREINAAGLGDITGAVGTENVQGEAQQKLDVYANDKFKAALEARDQVCGVASEEEDEAVAFNKELNQNAKYVVLMDPLDGSSNIDVNVSVGTIFSIYRRVSPIGTPATEEDFLQPGHKQVAAGYVIYGSSTMLVYTTGNGVNGFTYDPSIGSFCLSHENMMIPEDGKIYSINEGNYIRFPQGVKKYIKYCQENVPEDGRPYTSRYIGSLVADFHRNLLKGGIYLYPSTQSHPQGKLRLLYECNPMAFLIEQAGGIASDGVNRIMDIKPTELHQRVPFFVGSKNMVRKVEEFLELHRDEE.

The Mg(2+) site is built by E92, D115, L117, and D118. Residues 118 to 121 (DGSS), N211, Y244, 262 to 264 (YLY), and K274 each bind substrate. Residue E280 participates in Mg(2+) binding.

It belongs to the FBPase class 1 family. As to quaternary structure, homotetramer. Mg(2+) serves as cofactor.

It is found in the cytoplasm. It catalyses the reaction beta-D-fructose 1,6-bisphosphate + H2O = beta-D-fructose 6-phosphate + phosphate. Its pathway is carbohydrate biosynthesis; gluconeogenesis. In Vibrio parahaemolyticus serotype O3:K6 (strain RIMD 2210633), this protein is Fructose-1,6-bisphosphatase class 1.